The following is a 457-amino-acid chain: Bifunctional protein GlmU (457 aa).

The interval 1 to 229 (MYNCAIILAA…YEEIMGVNSR (229 aa)) is pyrophosphorylase. Residues 8–11 (LAAG), lysine 22, glutamine 73, and 78–79 (GT) each bind UDP-N-acetyl-alpha-D-glucosamine. Aspartate 103 serves as a coordination point for Mg(2+). The UDP-N-acetyl-alpha-D-glucosamine site is built by glycine 140, glutamate 155, asparagine 170, and asparagine 227. Residue asparagine 227 participates in Mg(2+) binding. The interval 230-250 (VQLSEAEIVMRKRINHKHMVN) is linker. The interval 251-457 (GVTFIDCEST…WLDKKGLLKK (207 aa)) is N-acetyltransferase. UDP-N-acetyl-alpha-D-glucosamine contacts are provided by arginine 332 and lysine 350. Histidine 362 serves as the catalytic Proton acceptor. Residues tyrosine 365 and asparagine 376 each coordinate UDP-N-acetyl-alpha-D-glucosamine. Acetyl-CoA is bound by residues 385–386 (NY), alanine 422, and arginine 439.

The protein in the N-terminal section; belongs to the N-acetylglucosamine-1-phosphate uridyltransferase family. This sequence in the C-terminal section; belongs to the transferase hexapeptide repeat family. In terms of assembly, homotrimer. Mg(2+) serves as cofactor.

The protein resides in the cytoplasm. The catalysed reaction is alpha-D-glucosamine 1-phosphate + acetyl-CoA = N-acetyl-alpha-D-glucosamine 1-phosphate + CoA + H(+). It catalyses the reaction N-acetyl-alpha-D-glucosamine 1-phosphate + UTP + H(+) = UDP-N-acetyl-alpha-D-glucosamine + diphosphate. The protein operates within nucleotide-sugar biosynthesis; UDP-N-acetyl-alpha-D-glucosamine biosynthesis; N-acetyl-alpha-D-glucosamine 1-phosphate from alpha-D-glucosamine 6-phosphate (route II): step 2/2. It participates in nucleotide-sugar biosynthesis; UDP-N-acetyl-alpha-D-glucosamine biosynthesis; UDP-N-acetyl-alpha-D-glucosamine from N-acetyl-alpha-D-glucosamine 1-phosphate: step 1/1. Its pathway is bacterial outer membrane biogenesis; LPS lipid A biosynthesis. In terms of biological role, catalyzes the last two sequential reactions in the de novo biosynthetic pathway for UDP-N-acetylglucosamine (UDP-GlcNAc). The C-terminal domain catalyzes the transfer of acetyl group from acetyl coenzyme A to glucosamine-1-phosphate (GlcN-1-P) to produce N-acetylglucosamine-1-phosphate (GlcNAc-1-P), which is converted into UDP-GlcNAc by the transfer of uridine 5-monophosphate (from uridine 5-triphosphate), a reaction catalyzed by the N-terminal domain. In Clostridium botulinum (strain Langeland / NCTC 10281 / Type F), this protein is Bifunctional protein GlmU.